The sequence spans 103 residues: Large ribosomal subunit protein uL23 (103 aa).

It belongs to the universal ribosomal protein uL23 family. Part of the 50S ribosomal subunit. Contacts protein L29, and trigger factor when it is bound to the ribosome.

In terms of biological role, one of the early assembly proteins it binds 23S rRNA. One of the proteins that surrounds the polypeptide exit tunnel on the outside of the ribosome. Forms the main docking site for trigger factor binding to the ribosome. This chain is Large ribosomal subunit protein uL23, found in Prochlorococcus marinus (strain NATL1A).